The chain runs to 186 residues: MTKSTYVELGEEKTSNQKGNMKRGVSILDFILRLIAIVATLASAIAMGTTDESLPFFTQFVRFRANYDDLPTLRFFVVASAIVSGYLILSLPLSILHIIRSSAGMTRVIFIILDTVMLGLLTAGSSAAASIVYLAHKGNRKANWFAFCQQYNSFCERISGSLIGSFIAIPLFIMLILLSALVLSRR.

Residues 1–26 (MTKSTYVELGEEKTSNQKGNMKRGVS) are Cytoplasmic-facing. Residues 27 to 47 (ILDFILRLIAIVATLASAIAM) form a helical membrane-spanning segment. Topologically, residues 48-74 (GTTDESLPFFTQFVRFRANYDDLPTLR) are extracellular. A helical transmembrane segment spans residues 75 to 95 (FFVVASAIVSGYLILSLPLSI). At 96-107 (LHIIRSSAGMTR) the chain is on the cytoplasmic side. The helical transmembrane segment at 108 to 128 (VIFIILDTVMLGLLTAGSSAA) threads the bilayer. Residues 129 to 161 (ASIVYLAHKGNRKANWFAFCQQYNSFCERISGS) lie on the Extracellular side of the membrane. A helical membrane pass occupies residues 162-182 (LIGSFIAIPLFIMLILLSALV). Residues 183 to 186 (LSRR) lie on the Cytoplasmic side of the membrane.

This sequence belongs to the Casparian strip membrane proteins (CASP) family. As to quaternary structure, homodimer and heterodimers.

It is found in the cell membrane. Its function is as follows. Regulates membrane-cell wall junctions and localized cell wall deposition. Required for establishment of the Casparian strip membrane domain (CSD) and the subsequent formation of Casparian strips, a cell wall modification of the root endodermis that determines an apoplastic barrier between the intraorganismal apoplasm and the extraorganismal apoplasm and prevents lateral diffusion. This chain is Casparian strip membrane protein 3, found in Medicago truncatula (Barrel medic).